A 220-amino-acid polypeptide reads, in one-letter code: MSKKKGLSLEEKRSRMMEIFFETKDVFQLKDIEKIAPKSKGITPMSVKEVLQSLVDDNMVDTERVGTSNYYWAFPSKALHARKRRLEELEKQLEDGSQRKKALQQAVDKAKVGREVNEEREDLLKELTALKGQRDQMKVEIEKYQECDPAVVEEIRNANIAAKEAVARWTGGTFGNYLISYLLTCSLTRQEPWAHHLSPSSGFSPGTACQTCYYYQQAIS.

The stretch at 76-147 (SKALHARKRR…KVEIEKYQEC (72 aa)) forms a coiled coil.

This sequence belongs to the MND1 family.

Its subcellular location is the nucleus. In terms of biological role, required for proper homologous chromosome pairing and efficient cross-over and intragenic recombination during meiosis. Stimulates both DMC1- and RAD51-mediated homologous strand assimilation, which is required for the resolution of meiotic double-strand breaks. This is Meiotic nuclear division protein 1 homolog from Danio rerio (Zebrafish).